A 184-amino-acid chain; its full sequence is Mitochondrial import inner membrane translocase subunit TIM22 (184 aa).

A disordered region spans residues 1 to 26 (MSLWGVYTGPQPPKKPLQEMTQEEQA). Intrachain disulfides connect Cys-40/Cys-118 and Cys-137/Cys-156. A run of 2 helical transmembrane segments spans residues 45–65 (VMAG…MASM) and 151–171 (AALV…MYLN).

The protein belongs to the Tim17/Tim22/Tim23 family. As to quaternary structure, component of the TIM22 complex, whose core is composed of TIM22 and TIM54, associated with the 70 kDa heterohexamer composed of TIM9 and TIM10 (or TIM8 and TIM13).

The protein localises to the mitochondrion inner membrane. In terms of biological role, essential core component of the TIM22 complex, a complex that mediates the import and insertion of multi-pass transmembrane proteins into the mitochondrial inner membrane. In the TIM22 complex, it constitutes the voltage-activated and signal-gated channel. Forms a twin-pore translocase that uses the membrane potential as external driving force in 2 voltage-dependent steps. The chain is Mitochondrial import inner membrane translocase subunit TIM22 from Candida albicans (strain SC5314 / ATCC MYA-2876) (Yeast).